The chain runs to 276 residues: 4-deoxy-L-threo-5-hexosulose-uronate ketol-isomerase (276 aa).

Residues histidine 194, histidine 196, glutamate 201, and histidine 243 each coordinate Zn(2+).

The protein belongs to the KduI family. Zn(2+) serves as cofactor.

It catalyses the reaction 5-dehydro-4-deoxy-D-glucuronate = 3-deoxy-D-glycero-2,5-hexodiulosonate. The protein operates within glycan metabolism; pectin degradation; 2-dehydro-3-deoxy-D-gluconate from pectin: step 4/5. Functionally, catalyzes the isomerization of 5-dehydro-4-deoxy-D-glucuronate to 3-deoxy-D-glycero-2,5-hexodiulosonate. This chain is 4-deoxy-L-threo-5-hexosulose-uronate ketol-isomerase, found in Shouchella clausii (strain KSM-K16) (Alkalihalobacillus clausii).